A 195-amino-acid polypeptide reads, in one-letter code: Imidazoleglycerol-phosphate dehydratase (195 aa).

The protein belongs to the imidazoleglycerol-phosphate dehydratase family.

The protein resides in the cytoplasm. The enzyme catalyses D-erythro-1-(imidazol-4-yl)glycerol 3-phosphate = 3-(imidazol-4-yl)-2-oxopropyl phosphate + H2O. It participates in amino-acid biosynthesis; L-histidine biosynthesis; L-histidine from 5-phospho-alpha-D-ribose 1-diphosphate: step 6/9. This Pelotomaculum thermopropionicum (strain DSM 13744 / JCM 10971 / SI) protein is Imidazoleglycerol-phosphate dehydratase.